Here is a 761-residue protein sequence, read N- to C-terminus: Prolyl oligopeptidase A (761 aa).

Residues Ser-606, Asp-690, and His-726 each act as charge relay system in the active site.

Belongs to the peptidase S9A family. Monomer.

It catalyses the reaction Hydrolysis of Pro-|-Xaa &gt;&gt; Ala-|-Xaa in oligopeptides.. Its function is as follows. Housekeeping prolyl oligopeptidase (POP) that behaves like a conventional POP by cleaving peptide bonds on the C-terminal side of prolyl residues within peptides that are up to approximately 30 amino acids long. This chain is Prolyl oligopeptidase A, found in Amanita bisporigera (Destroying angel).